A 343-amino-acid chain; its full sequence is Methionine import ATP-binding protein MetN 1 (343 aa).

The ABC transporter domain maps to 2-241 (IKLSNITKVF…PKTPLAQKFI (240 aa)). Residue 38 to 45 (GASGAGKS) coordinates ATP.

Belongs to the ABC transporter superfamily. Methionine importer (TC 3.A.1.24) family. The complex is composed of two ATP-binding proteins (MetN), two transmembrane proteins (MetI) and a solute-binding protein (MetQ).

It localises to the cell inner membrane. It carries out the reaction L-methionine(out) + ATP + H2O = L-methionine(in) + ADP + phosphate + H(+). The enzyme catalyses D-methionine(out) + ATP + H2O = D-methionine(in) + ADP + phosphate + H(+). Part of the ABC transporter complex MetNIQ involved in methionine import. Responsible for energy coupling to the transport system. The sequence is that of Methionine import ATP-binding protein MetN 1 from Salmonella choleraesuis (strain SC-B67).